The following is a 125-amino-acid chain: Fumarate reductase subunit D (125 aa).

Transmembrane regions (helical) follow at residues 29-49 (VTALVAPVLLLLFGLAFPLGW), 64-84 (NPITKLVVLVLVVLALFHAAH), and 102-122 (VIALWCYGMAVLGSATAGWML).

The protein belongs to the FrdD family. Part of an enzyme complex containing four subunits: a flavoprotein (FrdA), an iron-sulfur protein (FrdB), and two hydrophobic anchor proteins (FrdC and FrdD).

Its subcellular location is the cell membrane. Anchors the catalytic components of the fumarate reductase complex to the cell membrane, binds quinones. This is Fumarate reductase subunit D from Mycobacterium bovis (strain BCG / Tokyo 172 / ATCC 35737 / TMC 1019).